The primary structure comprises 592 residues: Beta-xylosidase (592 aa).

An N-terminal signal peptide occupies residues Met-1 to Ala-19. Cys-20 carries N-palmitoyl cysteine lipidation. Cys-20 is lipidated: S-diacylglycerol cysteine.

Belongs to the glycosyl hydrolase 43 family.

The protein localises to the cell outer membrane. In terms of biological role, xylosidase involved in ulvan degradation. Ulvan is the main polysaccharide component of the Ulvales (green seaweed) cell wall. It is composed of disaccharide building blocks comprising 3-sulfated rhamnose (Rha3S) linked to D-glucuronic acid (GlcA), L-iduronic acid (IduA), or D-xylose (Xyl). Beta-xylosidase converts Xyl-Rha3S, a product of alpha-L-rhamnosidase acting on Rha-Xyl-Rha3S oligosaccharides, further to Xyl and Rha3S. The sequence is that of Beta-xylosidase from Formosa agariphila (strain DSM 15362 / KCTC 12365 / LMG 23005 / KMM 3901 / M-2Alg 35-1).